We begin with the raw amino-acid sequence, 260 residues long: Ribosomal RNA small subunit methyltransferase A (260 aa).

Residues Leu-23, Gly-48, Glu-69, Asp-94, and Asn-110 each coordinate S-adenosyl-L-methionine.

Belongs to the class I-like SAM-binding methyltransferase superfamily. rRNA adenine N(6)-methyltransferase family. RsmA subfamily.

The protein localises to the cytoplasm. The catalysed reaction is adenosine(1518)/adenosine(1519) in 16S rRNA + 4 S-adenosyl-L-methionine = N(6)-dimethyladenosine(1518)/N(6)-dimethyladenosine(1519) in 16S rRNA + 4 S-adenosyl-L-homocysteine + 4 H(+). In terms of biological role, specifically dimethylates two adjacent adenosines (A1518 and A1519) in the loop of a conserved hairpin near the 3'-end of 16S rRNA in the 30S particle. May play a critical role in biogenesis of 30S subunits. This is Ribosomal RNA small subunit methyltransferase A from Thermotoga neapolitana (strain ATCC 49049 / DSM 4359 / NBRC 107923 / NS-E).